Reading from the N-terminus, the 89-residue chain is Albumin-1 (89 aa).

Ala1 is a signal peptide. 3 disulfide bridges follow: Cys4/Cys21, Cys8/Cys23, and Cys16/Cys33. The propeptide occupies 39–46; that stretch reads LSSVAKMI.

In terms of processing, the C-terminal glycine may be removed from A1b.

In terms of biological role, A1b binds to basic 7S globulin (BG) and stimulates its phosphorylation activity. The polypeptide is Albumin-1 (LEG) (Vigna radiata var. radiata (Mung bean)).